The chain runs to 227 residues: Flagellar transcriptional regulator FtcR (227 aa).

Residues 1–116 (MIVVVDDRDM…EILARINAIR (116 aa)) form the Response regulatory domain. Residues 127-226 (ADGTQLGPIR…KRFLGYCINI (100 aa)) constitute a DNA-binding region (ompR/PhoB-type).

Functionally, required for transcription of flagellar genes. This chain is Flagellar transcriptional regulator FtcR (ftcR), found in Brucella abortus (strain 2308).